The sequence spans 449 residues: Na(+)/H(+) antiporter NhaA (449 aa).

Helical transmembrane passes span 30-50, 69-89, 112-132, 138-158, 168-188, 192-212, 218-238, 241-261, 312-332, 348-368, 386-406, and 419-439; these read IFLI…WAGA, FGLT…FLVA, LLAA…LNLG, GWGI…GLLG, FLIA…ALFY, LSWI…LMNW, LIWY…SGIH, IAGV…SKIL, SLVD…NAGV, LGIL…FTLI, IIGI…ITNL, and ISIL…LLLT.

Belongs to the NhaA Na(+)/H(+) (TC 2.A.33) antiporter family.

The protein resides in the cell inner membrane. The catalysed reaction is Na(+)(in) + 2 H(+)(out) = Na(+)(out) + 2 H(+)(in). Functionally, na(+)/H(+) antiporter that extrudes sodium in exchange for external protons. The protein is Na(+)/H(+) antiporter NhaA of Christiangramia forsetii (strain DSM 17595 / CGMCC 1.15422 / KT0803) (Gramella forsetii).